Consider the following 872-residue polypeptide: Alanine--tRNA ligase (872 aa).

Positions 567, 571, 669, and 673 each coordinate Zn(2+).

It belongs to the class-II aminoacyl-tRNA synthetase family. Requires Zn(2+) as cofactor.

Its subcellular location is the cytoplasm. It carries out the reaction tRNA(Ala) + L-alanine + ATP = L-alanyl-tRNA(Ala) + AMP + diphosphate. Its function is as follows. Catalyzes the attachment of alanine to tRNA(Ala) in a two-step reaction: alanine is first activated by ATP to form Ala-AMP and then transferred to the acceptor end of tRNA(Ala). Also edits incorrectly charged Ser-tRNA(Ala) and Gly-tRNA(Ala) via its editing domain. The protein is Alanine--tRNA ligase of Streptococcus thermophilus (strain CNRZ 1066).